We begin with the raw amino-acid sequence, 411 residues long: Anthranilate synthase component 1 (411 aa).

L-tryptophan-binding positions include Ser-27 and 203-205 (PYM). 237–238 (GT) is a binding site for chorismate. Glu-262 is a Mg(2+) binding site. Chorismate-binding positions include Tyr-350, Arg-369, 382 to 384 (GAG), and Gly-384. Glu-397 is a Mg(2+) binding site.

The protein belongs to the anthranilate synthase component I family. Heterotetramer consisting of two non-identical subunits: a beta subunit (TrpG) and a large alpha subunit (TrpE). Requires Mg(2+) as cofactor.

The catalysed reaction is chorismate + L-glutamine = anthranilate + pyruvate + L-glutamate + H(+). It functions in the pathway amino-acid biosynthesis; L-tryptophan biosynthesis; L-tryptophan from chorismate: step 1/5. Its activity is regulated as follows. Feedback inhibited by tryptophan. Its function is as follows. Part of a heterotetrameric complex that catalyzes the two-step biosynthesis of anthranilate, an intermediate in the biosynthesis of L-tryptophan. In the first step, the glutamine-binding beta subunit (TrpG) of anthranilate synthase (AS) provides the glutamine amidotransferase activity which generates ammonia as a substrate that, along with chorismate, is used in the second step, catalyzed by the large alpha subunit of AS (TrpE) to produce anthranilate. In the absence of TrpG, TrpE can synthesize anthranilate directly from chorismate and high concentrations of ammonia. The protein is Anthranilate synthase component 1 (trpE) of Archaeoglobus fulgidus (strain ATCC 49558 / DSM 4304 / JCM 9628 / NBRC 100126 / VC-16).